The following is a 148-amino-acid chain: 3-hydroxyacyl-[acyl-carrier-protein] dehydratase FabZ (148 aa).

His-48 is a catalytic residue.

This sequence belongs to the thioester dehydratase family. FabZ subfamily.

Its subcellular location is the cytoplasm. It carries out the reaction a (3R)-hydroxyacyl-[ACP] = a (2E)-enoyl-[ACP] + H2O. Its function is as follows. Involved in unsaturated fatty acids biosynthesis. Catalyzes the dehydration of short chain beta-hydroxyacyl-ACPs and long chain saturated and unsaturated beta-hydroxyacyl-ACPs. In Nitratiruptor sp. (strain SB155-2), this protein is 3-hydroxyacyl-[acyl-carrier-protein] dehydratase FabZ.